The sequence spans 444 residues: Serine/threonine-protein kinase 2 (444 aa).

Residues 87-444 (NRDFYHLSTG…WIDGKSTSHQ (358 aa)) form the Protein kinase domain. Residues 93 to 101 (LSTGGYGII) and Lys-118 contribute to the ATP site. Asp-307 acts as the Proton acceptor in catalysis.

Belongs to the protein kinase superfamily. Ser/Thr protein kinase family. Poxviruses subfamily. Post-translationally, phosphorylated in vivo. Autophosphorylated in vitro.

The protein resides in the host endoplasmic reticulum. It is found in the host endoplasmic reticulum-Golgi intermediate compartment. It catalyses the reaction L-seryl-[protein] + ATP = O-phospho-L-seryl-[protein] + ADP + H(+). The catalysed reaction is L-threonyl-[protein] + ATP = O-phospho-L-threonyl-[protein] + ADP + H(+). Essential serine-protein kinase involved in the early stage of virion morphogenesis. The protein is Serine/threonine-protein kinase 2 (OPG054) of Vertebrata (FPV).